The primary structure comprises 718 residues: Origin of replication complex subunit 3 (718 aa).

Low complexity predominate over residues 26–43 (GAAASSSSSSAPSLPSSG). The interval 26–75 (GAAASSSSSSAPSLPSSGRARRRIDVSGLASPNPKPGKRSRDDDAAEDDD) is disordered. The Nuclear localization signal signature appears at 659 to 666 (IKRKPHTS).

Belongs to the ORC3 family. In terms of assembly, component of the origin recognition complex (ORC) composed of at least ORC1, ORC2, ORC3, ORC4, ORC5 and ORC6. ORC is regulated in a cell-cycle and development dependent manner. It is sequentially assembled at the exit from anaphase of mitosis and disassembled as cells enter S phase. Expressed at low levels in the shoot apical meristem (SAM), leaves, ears and roots (including root tips).

It localises to the nucleus. In terms of biological role, component of the origin recognition complex (ORC) that binds origins of replication. DNA-binding is ATP-dependent. The specific DNA sequences that define origins of replication have not been identified yet. This is Origin of replication complex subunit 3 from Oryza sativa subsp. japonica (Rice).